A 955-amino-acid chain; its full sequence is MAM domain-containing glycosylphosphatidylinositol anchor protein 1 (955 aa).

The first 18 residues, 1 to 18, serve as a signal peptide directing secretion; the sequence is MEVTCLLLLALIPFHCRG. 2 consecutive Ig-like domains span residues 24-123 and 132-230; these read PAQA…KSIR and PMLT…KAIT. Residues Asn42 and Asn90 are each glycosylated (N-linked (GlcNAc...) asparagine). 2 cysteine pairs are disulfide-bonded: Cys60/Cys108 and Cys157/Cys214. Residues Asn235, Asn247, Asn257, Asn307, and Asn331 are each glycosylated (N-linked (GlcNAc...) asparagine). The Ig-like 3 domain occupies 240-323; that stretch reads PALKLSVNET…VGNPAKKTVN (84 aa). Cysteines 262 and 308 form a disulfide. 3 consecutive Ig-like domains span residues 338 to 432, 440 to 532, and 539 to 631; these read PDVI…VEVN, PTIS…AQVQ, and PEVE…FQVS. A disulfide bridge connects residues Cys357 and Cys415. N-linked (GlcNAc...) asparagine glycosylation is present at Asn432. 2 disulfides stabilise this stretch: Cys463/Cys514 and Cys560/Cys615. A Fibronectin type-III domain is found at 643–743; sequence TPNPTRSHKL…SRIIHYTEPI (101 aa). Residues Asn655 and Asn747 are each glycosylated (N-linked (GlcNAc...) asparagine). The region spanning 751–918 is the MAM domain; the sequence is NTCHFEDEKI…VTLKKGECPR (168 aa). Residues 779 to 788 show a composition bias toward polar residues; sequence LTQNPKRSPN. Residues 779-798 form a disordered region; it reads LTQNPKRSPNTGPPTDISGT. N-linked (GlcNAc...) asparagine glycosylation is present at Asn826. Ser932 carries the GPI-anchor amidated serine lipid modification. The propeptide at 933 to 955 is removed in mature form; the sequence is GAPCQSSPQLWGPMAIFLLALQR.

In terms of assembly, interacts heterophilically through its MAM domain with proteins in axon-rich regions and through its Ig-like domains with proteins in differentiating muscle. Interacts (through the Ig-like domains) with NLGN2. As to expression, has been found in brain, heart, skeletal muscle and kidney. Found to be overexpressed in tumor tissues.

It is found in the cell membrane. Functionally, required for radial migration of cortical neurons in the superficial layer of the neocortex. Plays a role in the formation or maintenance of inhibitory synapses. May function by inhibiting the activity of NLGN2. The chain is MAM domain-containing glycosylphosphatidylinositol anchor protein 1 (MDGA1) from Homo sapiens (Human).